Here is an 89-residue protein sequence, read N- to C-terminus: Small ribosomal subunit protein uS15 (89 aa).

This sequence belongs to the universal ribosomal protein uS15 family. As to quaternary structure, part of the 30S ribosomal subunit. Forms a bridge to the 50S subunit in the 70S ribosome, contacting the 23S rRNA.

Functionally, one of the primary rRNA binding proteins, it binds directly to 16S rRNA where it helps nucleate assembly of the platform of the 30S subunit by binding and bridging several RNA helices of the 16S rRNA. Forms an intersubunit bridge (bridge B4) with the 23S rRNA of the 50S subunit in the ribosome. This chain is Small ribosomal subunit protein uS15, found in Chlorobium chlorochromatii (strain CaD3).